We begin with the raw amino-acid sequence, 331 residues long: MRRKTRNFKHKTVKDNKVLTEGSDQESEKDNSQCCDPATNERVQAEKRQYVCTECGKAFSQSANLTVHERIHTGEKPYKCKECGKAFSHSSNLVVHRRIHTGLKPYTCSECGKSFSGKSHLIRHQGIHSGEKTYECKECGKAFSRSSGLISHHRVHTGEKPYSCIECGKAFSRSSNLTQHQRMHRGKKVYKCKECGKTCGSNTKIMDHQRIHTGEKPYECDECGKTFILRKTLNEHQRLHRREKPYKCNECGKAFTSNRNLVDHQRVHTGEKPYKCNECGKTFRQTSQVILHLRTHTKEKPYKCSECGKAYRYSSQLIQHQRKHNEEKETS.

Positions 1 to 12 (MRRKTRNFKHKT) are enriched in basic residues. The tract at residues 1-35 (MRRKTRNFKHKTVKDNKVLTEGSDQESEKDNSQCC) is disordered. Serine 23 is modified (phosphoserine). C2H2-type zinc fingers lie at residues 50–72 (YVCT…ERIH), 78–100 (YKCK…RRIH), 106–128 (YTCS…QGIH), 134–156 (YECK…HRVH), 162–184 (YSCI…QRMH), 190–212 (YKCK…QRIH), 218–240 (YECD…QRLH), 246–268 (YKCN…QRVH), 274–296 (YKCN…LRTH), and 302–324 (YKCS…QRKH).

Belongs to the krueppel C2H2-type zinc-finger protein family.

It is found in the nucleus. Functionally, may be involved in transcriptional regulation. In Homo sapiens (Human), this protein is Zinc finger protein 660 (ZNF660).